The following is a 335-amino-acid chain: tRNA-splicing endonuclease (335 aa).

Catalysis depends on residues tyrosine 269, histidine 280, and lysine 311.

This sequence belongs to the tRNA-intron endonuclease family. Archaeal long subfamily. As to quaternary structure, homodimer.

The catalysed reaction is pretRNA = a 3'-half-tRNA molecule with a 5'-OH end + a 5'-half-tRNA molecule with a 2',3'-cyclic phosphate end + an intron with a 2',3'-cyclic phosphate and a 5'-hydroxyl terminus.. Functionally, endonuclease that removes tRNA introns. Cleaves pre-tRNA at the 5'- and 3'-splice sites to release the intron. The products are an intron and two tRNA half-molecules bearing 2',3' cyclic phosphate and 5'-OH termini. Recognizes a pseudosymmetric substrate in which 2 bulged loops of 3 bases are separated by a stem of 4 bp. This chain is tRNA-splicing endonuclease, found in Haloarcula marismortui (strain ATCC 43049 / DSM 3752 / JCM 8966 / VKM B-1809) (Halobacterium marismortui).